A 1227-amino-acid polypeptide reads, in one-letter code: Methionine synthase (1227 aa).

The 324-residue stretch at 2–325 (SSKVEQLRAQ…EHIAAMSRAV (324 aa)) folds into the Hcy-binding domain. Residues Cys-247, Cys-310, and Cys-311 each contribute to the Zn(2+) site. Residues 356–617 (FVNVGERTNV…LPAELRDAVE (262 aa)) form the Pterin-binding domain. Positions 650-744 (QQAEWRSWDV…FIEASKEKGS (95 aa)) constitute a B12-binding N-terminal domain. Residues Glu-694, 756–760 (GDVHD), His-759, Ser-804, Thr-808, and Ala-860 contribute to the methylcob(III)alamin site. Residues 746–881 (NGKMVIATVK…SDTQRDDFVA (136 aa)) enclose the B12-binding domain. The AdoMet activation domain occupies 897-1227 (KKPRTPPVTL…LAPNLGYDAD (331 aa)). S-adenosyl-L-methionine-binding positions include Asp-946, Arg-1134, and 1189-1190 (YF).

Belongs to the vitamin-B12 dependent methionine synthase family. Methylcob(III)alamin serves as cofactor. Requires Zn(2+) as cofactor.

It catalyses the reaction (6S)-5-methyl-5,6,7,8-tetrahydrofolate + L-homocysteine = (6S)-5,6,7,8-tetrahydrofolate + L-methionine. The protein operates within amino-acid biosynthesis; L-methionine biosynthesis via de novo pathway; L-methionine from L-homocysteine (MetH route): step 1/1. Catalyzes the transfer of a methyl group from methyl-cobalamin to homocysteine, yielding enzyme-bound cob(I)alamin and methionine. Subsequently, remethylates the cofactor using methyltetrahydrofolate. The chain is Methionine synthase (metH) from Salmonella typhimurium (strain LT2 / SGSC1412 / ATCC 700720).